Reading from the N-terminus, the 363-residue chain is Homeobox protein Hox-A2 (363 aa).

Disordered stretches follow at residues 23-133 (TSFP…SRRL) and 183-216 (MKHK…DEEK). 2 stretches are compositionally biased toward polar residues: residues 31–46 (TFQS…SHST) and 55–78 (TIPS…NGTS). Positions 88–93 (EYPWMK) match the Antp-type hexapeptide motif. The homeobox DNA-binding region spans 130–189 (SRRLRTAYTNTQLLELEKEFHFNKYLCRPRRVEIAALLDLTERQVKVWFQNRRMKHKRQT).

The protein belongs to the Antp homeobox family. Proboscipedia subfamily.

It localises to the nucleus. Sequence-specific transcription factor which is part of a developmental regulatory system that provides cells with specific positional identities on the anterior-posterior axis. This chain is Homeobox protein Hox-A2 (HOXA2), found in Heterodontus francisci (Horn shark).